A 311-amino-acid chain; its full sequence is MSNQLLDRVVAEIADEMAQRADRGEVASYIPQLARVDPKAFGLAVIGADGHIAAAGDADVPFSIQSISKVFTLTLALGKAGDRLWRRVGREPSGSAFNSIVQLEHERGIPRNPFINAGAIAVTDLILSGHQPREALGEILRFMQFLAGDSSIAIDEAVAKSEQRTGFRNAALANYMKSFGVLDNPVEYTLGVYFHHCAIAMSCRQLAMAGRFLAHNGQNPSTGLNVVSSERARRINALMLTCGHYDGSGEFAYRVGLPGKSGVGGGILAVAPGRASIAVWAPGLDAAGNSHLGRVALEGLTKRMGWSIFGV.

Substrate-binding residues include Ser66, Asn116, Glu162, Asn169, Tyr193, Tyr245, and Val263.

The protein belongs to the glutaminase family. In terms of assembly, homotetramer.

The catalysed reaction is L-glutamine + H2O = L-glutamate + NH4(+). The chain is Glutaminase from Rhodopseudomonas palustris (strain TIE-1).